Here is a 54-residue protein sequence, read N- to C-terminus: Ribulose bisphosphate carboxylase large chain (54 aa).

Positions 1–2 (MS) are excised as a propeptide. Pro3 carries the N-acetylproline modification. Residue Lys14 is modified to N6,N6,N6-trimethyllysine.

It belongs to the RuBisCO large chain family. Type I subfamily. In terms of assembly, heterohexadecamer of 8 large chains and 8 small chains.

The protein resides in the plastid. It is found in the chloroplast. It catalyses the reaction 2 (2R)-3-phosphoglycerate + 2 H(+) = D-ribulose 1,5-bisphosphate + CO2 + H2O. The catalysed reaction is D-ribulose 1,5-bisphosphate + O2 = 2-phosphoglycolate + (2R)-3-phosphoglycerate + 2 H(+). In terms of biological role, ruBisCO catalyzes two reactions: the carboxylation of D-ribulose 1,5-bisphosphate, the primary event in carbon dioxide fixation, as well as the oxidative fragmentation of the pentose substrate in the photorespiration process. Both reactions occur simultaneously and in competition at the same active site. The chain is Ribulose bisphosphate carboxylase large chain (rbcL) from Colletia hystrix (Crucifixion thorn).